We begin with the raw amino-acid sequence, 674 residues long: Methionine--tRNA ligase (674 aa).

The 'HIGH' region motif lies at 11–21 (PYANGDLHLGH). Positions 142, 145, 155, and 158 each coordinate Zn(2+). The short motif at 330–334 (KMSKS) is the 'KMSKS' region element. An ATP-binding site is contributed by Lys333. The region spanning 574-674 (DFMKVDLRIA…EGAQPGMRVK (101 aa)) is the tRNA-binding domain.

The protein belongs to the class-I aminoacyl-tRNA synthetase family. MetG type 1 subfamily. Homodimer. Requires Zn(2+) as cofactor.

The protein resides in the cytoplasm. It catalyses the reaction tRNA(Met) + L-methionine + ATP = L-methionyl-tRNA(Met) + AMP + diphosphate. Its function is as follows. Is required not only for elongation of protein synthesis but also for the initiation of all mRNA translation through initiator tRNA(fMet) aminoacylation. The chain is Methionine--tRNA ligase from Francisella tularensis subsp. tularensis (strain WY96-3418).